We begin with the raw amino-acid sequence, 662 residues long: Methionine--tRNA ligase (662 aa).

Residues 13–23 (PYTNGPCHLGH) carry the 'HIGH' region motif. Residues cysteine 144, cysteine 147, cysteine 156, and cysteine 160 each contribute to the Zn(2+) site. The short motif at 326-330 (KFSKS) is the 'KMSKS' region element. Residue lysine 329 coordinates ATP. A tRNA-binding domain is found at 564-662 (DFSKVEIKTG…KPVEPGTKIR (99 aa)).

This sequence belongs to the class-I aminoacyl-tRNA synthetase family. MetG type 1 subfamily. In terms of assembly, homodimer. The cofactor is Zn(2+).

It localises to the cytoplasm. The enzyme catalyses tRNA(Met) + L-methionine + ATP = L-methionyl-tRNA(Met) + AMP + diphosphate. In terms of biological role, is required not only for elongation of protein synthesis but also for the initiation of all mRNA translation through initiator tRNA(fMet) aminoacylation. The chain is Methionine--tRNA ligase from Methanoregula boonei (strain DSM 21154 / JCM 14090 / 6A8).